Consider the following 162-residue polypeptide: UPF0262 protein Acry_0160 (162 aa).

This sequence belongs to the UPF0262 family.

The polypeptide is UPF0262 protein Acry_0160 (Acidiphilium cryptum (strain JF-5)).